The following is a 378-amino-acid chain: Probable pectin lyase A (378 aa).

The first 18 residues, 1 to 18 (MKYQGLLAIAGCIASASA), serve as a signal peptide directing secretion. Intrachain disulfides connect C81–C100 and C90–C224. A glycan (N-linked (GlcNAc...) asparagine) is linked at N127. Residue R254 is part of the active site. Residues C321 and C329 are joined by a disulfide bond.

This sequence belongs to the polysaccharide lyase 1 family.

It localises to the secreted. It catalyses the reaction Eliminative cleavage of (1-&gt;4)-alpha-D-galacturonan methyl ester to give oligosaccharides with 4-deoxy-6-O-methyl-alpha-D-galact-4-enuronosyl groups at their non-reducing ends.. Its function is as follows. Pectinolytic enzymes consist of four classes of enzymes: pectin lyase, polygalacturonase, pectin methylesterase and rhamnogalacturonase. Among pectinolytic enzymes, pectin lyase is the most important in depolymerization of pectin, since it cleaves internal glycosidic bonds of highly methylated pectins. In Neosartorya fischeri (strain ATCC 1020 / DSM 3700 / CBS 544.65 / FGSC A1164 / JCM 1740 / NRRL 181 / WB 181) (Aspergillus fischerianus), this protein is Probable pectin lyase A (pelA).